We begin with the raw amino-acid sequence, 691 residues long: Elongation factor G (691 aa).

One can recognise a tr-type G domain in the interval 12–286; that stretch reads NKLRNIGIMA…GIVRYLPSPL (275 aa). GTP-binding positions include 21–28, 85–89, and 139–142; these read AHIDAGKT, DTPGH, and NKMD.

This sequence belongs to the TRAFAC class translation factor GTPase superfamily. Classic translation factor GTPase family. EF-G/EF-2 subfamily.

It is found in the cytoplasm. In terms of biological role, catalyzes the GTP-dependent ribosomal translocation step during translation elongation. During this step, the ribosome changes from the pre-translocational (PRE) to the post-translocational (POST) state as the newly formed A-site-bound peptidyl-tRNA and P-site-bound deacylated tRNA move to the P and E sites, respectively. Catalyzes the coordinated movement of the two tRNA molecules, the mRNA and conformational changes in the ribosome. In Fervidobacterium nodosum (strain ATCC 35602 / DSM 5306 / Rt17-B1), this protein is Elongation factor G.